The primary structure comprises 348 residues: MDNSSVCPPNATVCEGDSCVVPESNFNAILNTVMSTVLTILLAMVMFSMGCNVEVHKFLGHIKRPWGIFVGFLCQFGIMPLTGFILSVASGILPVQAVVVLIMGCCPGGTGSNILAYWIDGDMDLSVSMTTCSTLLALGMMPLCLFVYTKMWVDSGTIVIPYDSIGISLVALVIPVSFGMFVNHKWPQKAKIILKIGSITGVILIVLIAVIGGILYQSAWIIEPKLWIIGTIFPIAGYSLGFFLARLAGQPWYRCRTVALETGMQNTQLCSTIVQLSFSPEDLNLVFTFPLIYTVFQLVFAAVILGIYVTYRKCYGKNDAEFLEKTDNEMDSRPSFDETNKGFQPDEK.

Topologically, residues methionine 1 to alanine 28 are extracellular. Asparagine 3 and asparagine 10 each carry an N-linked (GlcNAc...) asparagine glycan. A helical membrane pass occupies residues isoleucine 29–methionine 49. Residues glycine 50–serine 87 lie on the Cytoplasmic side of the membrane. Residues valine 88–glycine 108 traverse the membrane as a helical segment. The Extracellular segment spans residues glycine 109–serine 126. Residues valine 127–valine 147 form a helical membrane-spanning segment. Over tyrosine 148 to threonine 157 the chain is Cytoplasmic. The chain crosses the membrane as a helical span at residues isoleucine 158 to phenylalanine 178. At glycine 179–lysine 195 the chain is on the extracellular side. Residues isoleucine 196–tyrosine 216 traverse the membrane as a helical segment. Topologically, residues glutamine 217–proline 224 are cytoplasmic. The chain crosses the membrane as a helical span at residues lysine 225–alanine 245. Residues arginine 246–asparagine 284 are Extracellular-facing. The chain crosses the membrane as a helical span at residues leucine 285–leucine 305. Over glycine 306–lysine 348 the chain is Cytoplasmic. Positions asparagine 328–lysine 348 are disordered. Position 335 is a phosphoserine (serine 335).

It belongs to the bile acid:sodium symporter (BASS) (TC 2.A.28) family. Monomer and homodimer. In terms of tissue distribution, expressed in ileum.

The protein resides in the membrane. It catalyses the reaction taurocholate(out) + 2 Na(+)(out) = taurocholate(in) + 2 Na(+)(in). The catalysed reaction is cholate(out) + 2 Na(+)(out) = cholate(in) + 2 Na(+)(in). The enzyme catalyses taurochenodeoxycholate(out) + 2 Na(+)(out) = taurochenodeoxycholate(in) + 2 Na(+)(in). It carries out the reaction tauroursodeoxycholate(out) + 2 Na(+)(out) = tauroursodeoxycholate(in) + 2 Na(+)(in). It catalyses the reaction glycocholate(out) + 2 Na(+)(out) = glycocholate(in) + 2 Na(+)(in). The catalysed reaction is tauronorcholate(out) + 2 Na(+)(out) = tauronorcholate(in) + 2 Na(+)(in). The enzyme catalyses tauroallocholate(out) + 2 Na(+)(out) = tauroallocholate(in) + 2 Na(+)(in). It carries out the reaction taurodeoxycholate(out) + 2 Na(+)(out) = taurodeoxycholate(in) + 2 Na(+)(in). It catalyses the reaction tauro-beta-muricholate(out) + 2 Na(+)(out) = tauro-beta-muricholate(in) + 2 Na(+)(in). Its function is as follows. Plays a critical role in the sodium-dependent reabsorption of bile acids from the lumen of the small intestine. Transports various bile acids, unconjugated or conjugated, such as cholate and taurocholate. Also responsible for bile acid transport in the renal proximal tubules, a salvage mechanism that helps conserve bile acids. Works collaboratively with the Na(+)-taurocholate cotransporting polypeptide (NTCP), the organic solute transporter (OST), and the bile salt export pump (BSEP), to ensure efficacious biological recycling of bile acids during enterohepatic circulation. In Mus musculus (Mouse), this protein is Ileal sodium/bile acid cotransporter (Slc10a2).